The following is a 275-amino-acid chain: Reticulon-like protein B1 (275 aa).

Composition is skewed to basic and acidic residues over residues 1-10 (MAEEHKHDES) and 20-38 (VVER…HHGG). The disordered stretch occupies residues 1 to 68 (MAEEHKHDES…PSSPSSSMKS (68 aa)). Position 2 is an N-acetylalanine (Ala2). Residues 59–68 (PSSPSSSMKS) show a composition bias toward low complexity. Residues 89–274 (PADIFMWKNK…PLGPLKNKKK (186 aa)) enclose the Reticulon domain. A run of 3 helical transmembrane segments spans residues 99–119 (KMSG…ELME), 120–140 (YHLL…LFLW), and 194–214 (FLIA…FNFL).

In terms of assembly, interacts with VirB2. Predominantly expressed in root tissues.

The protein localises to the endoplasmic reticulum membrane. It localises to the cell membrane. Its function is as follows. Plays a role in the Agrobacterium-mediated plant transformation via its interaction with VirB2, the major component of the T-pilus. In Arabidopsis thaliana (Mouse-ear cress), this protein is Reticulon-like protein B1 (RTNLB1).